Consider the following 1199-residue polypeptide: Metabotropic glutamate receptor 1 (1199 aa).

An N-terminal signal peptide occupies residues 1–18; it reads MVRLLLIFFPMIFLEMSI. Residues 19-592 are Extracellular-facing; it reads LPRMPDRKVL…VRYLEWSDIE (574 aa). Cys67 and Cys109 form a disulfide bridge. An L-glutamate-binding site is contributed by Tyr74. Asn98 carries an N-linked (GlcNAc...) asparagine glycan. L-glutamate contacts are provided by residues Ser165 and 186 to 188; that span reads SAT. The N-linked (GlcNAc...) asparagine glycan is linked to Asn223. Residue Tyr236 coordinates L-glutamate. An intrachain disulfide couples Cys289 to Cys291. Asp318 serves as a coordination point for L-glutamate. The cysteines at positions 378 and 394 are disulfide-linked. Asn397 carries an N-linked (GlcNAc...) asparagine glycan. Lys409 contacts L-glutamate. Cys432 and Cys439 are oxidised to a cystine. The N-linked (GlcNAc...) asparagine glycan is linked to Asn515. Residues 593–615 form a helical membrane-spanning segment; sequence SIIAIAFSCLGILVTLFVTLIFV. At 616-629 the chain is on the cytoplasmic side; it reads LYRDTPVVKSSSRE. A helical transmembrane segment spans residues 630 to 650; it reads LCYIILAGIFLGYVCPFTLIA. Topologically, residues 651–658 are extracellular; it reads KPTTTSCY. A disulfide bond links Cys657 and Cys746. The chain crosses the membrane as a helical span at residues 659–680; it reads LQRLLVGLSSAMCYSALVTKTN. Over 681–703 the chain is Cytoplasmic; sequence RIARILAGSKKKICTRKPRFMSA. Residues 704–727 traverse the membrane as a helical segment; it reads WAQVIIASILISVQLTLVVTLIIM. The Extracellular segment spans residues 728–750; sequence EPPMPILSYPSIKEVYLICNTSN. A helical membrane pass occupies residues 751–772; it reads LGVVAPVGYNGLLIMSCTYYAF. Topologically, residues 773–785 are cytoplasmic; that stretch reads KTRNVPANFNEAK. Residues 786–807 form a helical membrane-spanning segment; that stretch reads YIAFTMYTTCIIWLAFVPIYFG. Topologically, residues 808–815 are extracellular; the sequence is SNYKIITT. A helical membrane pass occupies residues 816 to 840; sequence CFAVSLSVTVALGCMFTPKMYIIIA. Over 841–1199 the chain is Cytoplasmic; the sequence is KPERNVRSAF…RDYKQSSSTL (359 aa). The residue at position 853 (Ser853) is a Phosphoserine. The residue at position 871 (Thr871) is a Phosphothreonine. Disordered stretches follow at residues 882-905, 959-1036, and 1056-1081; these read GAGN…QAPK, EEDN…QPKS, and HAVL…PPQH. Residues 885–895 are compositionally biased toward polar residues; sequence NANSNGKSVSW. A phosphoserine mark is found at Ser894 and Ser969. A compositionally biased stretch (pro residues) spans 1012-1033; sequence GLPPPLPQQQPQQPPPQQPPQQ. Position 1098 is a phosphoserine (Ser1098). A disordered region spans residues 1120-1177; the sequence is EREGNTEEDELEEEEDLPTASKLTPEDSPALTPPSPFRDSVASGSSVPSSPVSESVLC. The segment covering 1125 to 1136 has biased composition (acidic residues); that stretch reads TEEDELEEEEDL. Residue Ser1147 is modified to Phosphoserine. Thr1151 carries the phosphothreonine modification. Ser1154 is modified (phosphoserine). A compositionally biased stretch (low complexity) spans 1159–1175; sequence SVASGSSVPSSPVSESV.

This sequence belongs to the G-protein coupled receptor 3 family. As to quaternary structure, homodimer; disulfide-linked. The PPXXF motif binds HOMER1, HOMER2 and HOMER3. Interacts with TAMALIN. Interacts with RYR1, RYR2, ITPR1, SHANK1 and SHANK3. Interacts with SIAH1. Predominantly expressed in cerebellar Purkinje cells, CA2-CA3 pyramidal cells of the hippocampus, and mitral and tufted cells of the olfactory bulb.

The protein localises to the cell membrane. The protein resides in the postsynaptic cell membrane. It is found in the cell projection. It localises to the dendrite. Its function is as follows. G-protein coupled receptor for glutamate. Ligand binding causes a conformation change that triggers signaling via guanine nucleotide-binding proteins (G proteins) and modulates the activity of down-stream effectors. Signaling activates a phosphatidylinositol-calcium second messenger system. May participate in the central action of glutamate in the CNS, such as long-term potentiation in the hippocampus and long-term depression in the cerebellum. May function in the light response in the retina. Induces GRID1 and GRID2 cation-channel activation via GNAQ-PLC-PKC pathway in dopaminergic neurons and cerebellar Purkinje cell, respectively. The protein is Metabotropic glutamate receptor 1 (Grm1) of Rattus norvegicus (Rat).